Consider the following 365-residue polypeptide: Phospho-N-acetylmuramoyl-pentapeptide-transferase (365 aa).

10 helical membrane passes run Pro-15–Ile-35, Val-51–Leu-71, Thr-96–Phe-116, Ile-121–Val-141, Leu-156–Glu-176, Ile-180–Phe-200, Gly-217–Ala-237, His-238–His-258, Leu-279–Phe-299, and Thr-344–Leu-364.

This sequence belongs to the glycosyltransferase 4 family. MraY subfamily. Requires Mg(2+) as cofactor.

It localises to the cell inner membrane. It carries out the reaction UDP-N-acetyl-alpha-D-muramoyl-L-alanyl-gamma-D-glutamyl-meso-2,6-diaminopimeloyl-D-alanyl-D-alanine + di-trans,octa-cis-undecaprenyl phosphate = di-trans,octa-cis-undecaprenyl diphospho-N-acetyl-alpha-D-muramoyl-L-alanyl-D-glutamyl-meso-2,6-diaminopimeloyl-D-alanyl-D-alanine + UMP. Its pathway is cell wall biogenesis; peptidoglycan biosynthesis. Its function is as follows. Catalyzes the initial step of the lipid cycle reactions in the biosynthesis of the cell wall peptidoglycan: transfers peptidoglycan precursor phospho-MurNAc-pentapeptide from UDP-MurNAc-pentapeptide onto the lipid carrier undecaprenyl phosphate, yielding undecaprenyl-pyrophosphoryl-MurNAc-pentapeptide, known as lipid I. This chain is Phospho-N-acetylmuramoyl-pentapeptide-transferase, found in Picosynechococcus sp. (strain ATCC 27264 / PCC 7002 / PR-6) (Agmenellum quadruplicatum).